A 116-amino-acid polypeptide reads, in one-letter code: MSNIIKQLEQEQLKQNLPSFRPGDTLEVKVWVVEGSKRRLQAFEGVVIAIRNRGLHSAFTLRKVSNGVGVERVFQTHSPIVDSITVKRKGAVRQAKLYYLRERSGKSARIKERLGD.

It belongs to the bacterial ribosomal protein bL19 family.

This protein is located at the 30S-50S ribosomal subunit interface and may play a role in the structure and function of the aminoacyl-tRNA binding site. In Pasteurella multocida (strain Pm70), this protein is Large ribosomal subunit protein bL19.